The sequence spans 497 residues: Guanosine-5'-triphosphate,3'-diphosphate pyrophosphatase (497 aa).

Belongs to the GppA/Ppx family. GppA subfamily.

It carries out the reaction guanosine 3'-diphosphate 5'-triphosphate + H2O = guanosine 3',5'-bis(diphosphate) + phosphate + H(+). Its pathway is purine metabolism; ppGpp biosynthesis; ppGpp from GTP: step 2/2. Its function is as follows. Catalyzes the conversion of pppGpp to ppGpp. Guanosine pentaphosphate (pppGpp) is a cytoplasmic signaling molecule which together with ppGpp controls the 'stringent response', an adaptive process that allows bacteria to respond to amino acid starvation, resulting in the coordinated regulation of numerous cellular activities. In Vibrio cholerae serotype O1 (strain ATCC 39541 / Classical Ogawa 395 / O395), this protein is Guanosine-5'-triphosphate,3'-diphosphate pyrophosphatase.